An 859-amino-acid chain; its full sequence is Magnesium transporter ALR1 (859 aa).

The span at 1-20 (MSSSSSSSESSPNLSRSNSL) shows a compositional bias: low complexity. Disordered regions lie at residues 1 to 281 (MSSS…MPPQ) and 330 to 399 (TSST…NIPS). An N-acetylserine modification is found at serine 2. Basic and acidic residues-rich tracts occupy residues 28–42 (KTED…RQHP) and 55–73 (KNKE…EQKS). Tyrosine 77 is modified (phosphotyrosine). Serine 85 bears the Phosphoserine mark. A compositionally biased stretch (basic and acidic residues) spans 144-154 (PPKDVGVKRDY). Over residues 157–176 (SSSTASSGNKSKLSASSSAS) the composition is skewed to low complexity. Phosphoserine occurs at positions 185 and 188. Positions 193 to 203 (IPHESKSDTHS) are enriched in basic and acidic residues. Polar residues predominate over residues 213–235 (YSTTSAHSSINPAVLLTKSTSQK). Serine 220, serine 221, and serine 236 each carry phosphoserine. Threonine 242 is subject to Phosphothreonine. Residues 252-265 (TRASFDSDVSQASR) are compositionally biased toward polar residues. Residues 330–339 (TSSTSTSGSS) are compositionally biased toward low complexity. The span at 353 to 375 (EKSESTNETEIHEKKEDEHEKIK) shows a compositional bias: basic and acidic residues. 2 helical membrane-spanning segments follow: residues 744 to 764 (TMIG…GMNV) and 773 to 793 (IAWW…GWFL). Residues 830–859 (FNDRSKNINVRAGPSNKSVASLPSRYSRYD) are disordered. Position 850 is a phosphoserine (serine 850).

This sequence belongs to the CorA metal ion transporter (MIT) (TC 1.A.35) family.

Its subcellular location is the cell membrane. In terms of biological role, plasma membrane magnesium transporter. This chain is Magnesium transporter ALR1 (ALR1), found in Saccharomyces cerevisiae (strain ATCC 204508 / S288c) (Baker's yeast).